The following is a 449-amino-acid chain: Trigger factor (449 aa).

A PPIase FKBP-type domain is found at 172 to 257 (GDRVTVDFVG…LKQVEWAHLP (86 aa)).

It belongs to the FKBP-type PPIase family. Tig subfamily.

The protein localises to the cytoplasm. It carries out the reaction [protein]-peptidylproline (omega=180) = [protein]-peptidylproline (omega=0). Functionally, involved in protein export. Acts as a chaperone by maintaining the newly synthesized protein in an open conformation. Functions as a peptidyl-prolyl cis-trans isomerase. In Ralstonia nicotianae (strain ATCC BAA-1114 / GMI1000) (Ralstonia solanacearum), this protein is Trigger factor.